The chain runs to 364 residues: Aminomethyltransferase (364 aa).

This sequence belongs to the GcvT family. The glycine cleavage system is composed of four proteins: P, T, L and H.

It carries out the reaction N(6)-[(R)-S(8)-aminomethyldihydrolipoyl]-L-lysyl-[protein] + (6S)-5,6,7,8-tetrahydrofolate = N(6)-[(R)-dihydrolipoyl]-L-lysyl-[protein] + (6R)-5,10-methylene-5,6,7,8-tetrahydrofolate + NH4(+). The glycine cleavage system catalyzes the degradation of glycine. The protein is Aminomethyltransferase of Shewanella piezotolerans (strain WP3 / JCM 13877).